The following is a 121-amino-acid chain: Large ribosomal subunit protein bL19 (121 aa).

This sequence belongs to the bacterial ribosomal protein bL19 family.

Its function is as follows. This protein is located at the 30S-50S ribosomal subunit interface and may play a role in the structure and function of the aminoacyl-tRNA binding site. The protein is Large ribosomal subunit protein bL19 of Neisseria gonorrhoeae (strain ATCC 700825 / FA 1090).